The sequence spans 474 residues: Probable threonine--tRNA ligase, mitochondrial (474 aa).

The transit peptide at 1–27 (MMKLKKFQLHTPFAHSCNRVEIYTARF) directs the protein to the mitochondrion.

It belongs to the class-II aminoacyl-tRNA synthetase family.

It is found in the mitochondrion matrix. It catalyses the reaction tRNA(Thr) + L-threonine + ATP = L-threonyl-tRNA(Thr) + AMP + diphosphate + H(+). This is Probable threonine--tRNA ligase, mitochondrial from Schizosaccharomyces pombe (strain 972 / ATCC 24843) (Fission yeast).